The sequence spans 431 residues: tRNA(Ile)-lysidine synthase (431 aa).

19–24 provides a ligand contact to ATP; that stretch reads STGIDS.

Belongs to the tRNA(Ile)-lysidine synthase family.

The protein localises to the cytoplasm. It catalyses the reaction cytidine(34) in tRNA(Ile2) + L-lysine + ATP = lysidine(34) in tRNA(Ile2) + AMP + diphosphate + H(+). Functionally, ligates lysine onto the cytidine present at position 34 of the AUA codon-specific tRNA(Ile) that contains the anticodon CAU, in an ATP-dependent manner. Cytidine is converted to lysidine, thus changing the amino acid specificity of the tRNA from methionine to isoleucine. This chain is tRNA(Ile)-lysidine synthase, found in Staphylococcus aureus (strain MW2).